The sequence spans 113 residues: MTMEAKAILRTARISPQKARLVADQVRGLSAERAVNLLKFSDKKAAHLIKKVVESAIANAENNQGADVDELKVKTIMVDEGPSLKRFMARAKGRGTRILKRTSHITVIVGAAK.

This sequence belongs to the universal ribosomal protein uL22 family. Part of the 50S ribosomal subunit.

Its function is as follows. This protein binds specifically to 23S rRNA; its binding is stimulated by other ribosomal proteins, e.g. L4, L17, and L20. It is important during the early stages of 50S assembly. It makes multiple contacts with different domains of the 23S rRNA in the assembled 50S subunit and ribosome. Functionally, the globular domain of the protein is located near the polypeptide exit tunnel on the outside of the subunit, while an extended beta-hairpin is found that lines the wall of the exit tunnel in the center of the 70S ribosome. In Xanthomonas oryzae pv. oryzae (strain MAFF 311018), this protein is Large ribosomal subunit protein uL22.